The sequence spans 263 residues: uncharacterized protein (263 aa).

31–38 (GPTGSGKT) is an ATP binding site.

This sequence belongs to the CbbQ/NirQ/NorQ/GpvN family.

This is an uncharacterized protein from Staphylococcus aureus (strain USA300).